The sequence spans 172 residues: Shikimate kinase (172 aa).

14–19 (GAGKTT) lines the ATP pocket. Mg(2+) is bound at residue threonine 18. Substrate-binding residues include aspartate 36, arginine 60, and glycine 82. Arginine 119 lines the ATP pocket. Residue arginine 137 participates in substrate binding.

The protein belongs to the shikimate kinase family. Monomer. It depends on Mg(2+) as a cofactor.

It is found in the cytoplasm. The catalysed reaction is shikimate + ATP = 3-phosphoshikimate + ADP + H(+). The protein operates within metabolic intermediate biosynthesis; chorismate biosynthesis; chorismate from D-erythrose 4-phosphate and phosphoenolpyruvate: step 5/7. Functionally, catalyzes the specific phosphorylation of the 3-hydroxyl group of shikimic acid using ATP as a cosubstrate. The chain is Shikimate kinase from Thermobifida fusca (strain YX).